A 295-amino-acid chain; its full sequence is MAVLAPLIALVYSVPRLSRWLARPYCLLSALLSIAFLLVRKLPPICNGLPTQREDGNPCDFDWREVEILMFLSAIVMMKNRRSITVEQHVGNIFMFSKVANAILFFRLDIRMGLLYLTLCIVFLMTCKPPLYMGPEYIKYFNDKTIDEELERDKRVTWIVEFFANWSNDCQSFAPIYADLSLKYNCSGLNFGKVDVGRYTDVSTRYKVSTSPLTRQLPTLILFQGGKEVIRRPQIDKKGRAVSWTFSEENVIREFNLNELYQRAKKHSKGGDMSEEKPVDPAPTTVPDGENKKDK.

The first 48 residues, 1 to 48 (MAVLAPLIALVYSVPRLSRWLARPYCLLSALLSIAFLLVRKLPPICNG), serve as a signal peptide directing secretion. The Extracellular portion of the chain corresponds to 49–102 (LPTQREDGNPCDFDWREVEILMFLSAIVMMKNRRSITVEQHVGNIFMFSKVANA). A helical transmembrane segment spans residues 103 to 125 (ILFFRLDIRMGLLYLTLCIVFLM). The region spanning 114-269 (LLYLTLCIVF…LYQRAKKHSK (156 aa)) is the Thioredoxin domain. Topologically, residues 126–295 (TCKPPLYMGP…VPDGENKKDK (170 aa)) are cytoplasmic. Phosphoserine occurs at positions 211 and 243. Residues 266 to 295 (KHSKGGDMSEEKPVDPAPTTVPDGENKKDK) are disordered. The span at 269-279 (KGGDMSEEKPV) shows a compositional bias: basic and acidic residues. Positions 292 to 295 (KKDK) match the Di-lysine motif motif.

In terms of assembly, monomer. Homodimer; disulfide-linked. Occurs in both reduced and oxidized monomeric form. Oxidative conditions increase homodimerization. Interacts with CANX. Interacts with ATP2A2.

It localises to the endoplasmic reticulum membrane. It is found in the mitochondrion membrane. Functionally, endoplasmic reticulum and mitochondria-associated protein that probably functions as a regulator of cellular redox state and thereby regulates protein post-translational modification, protein folding and mitochondrial activity. Indirectly regulates neuronal proliferation, migration, and organization in the developing brain. In Mus musculus (Mouse), this protein is Thioredoxin-related transmembrane protein 2 (Tmx2).